A 509-amino-acid polypeptide reads, in one-letter code: Pyruvate kinase (509 aa).

A Phosphoserine modification is found at Ser29. Arg56 contacts substrate. Residues Asn58 and Ser60 each coordinate K(+). An ATP-binding site is contributed by Asn58–His61. Ser63 carries the post-translational modification Phosphoserine. K(+) is bound by residues Asp91 and Thr92. Positions 98 and 184 each coordinate ATP. Mg(2+) is bound at residue Glu249. Residues Gly272 and Asp273 each coordinate substrate. Asp273 is a binding site for Mg(2+). A Phosphoserine modification is found at Ser281. Substrate is bound at residue Thr305. Ser412 carries the phosphoserine modification.

This sequence belongs to the pyruvate kinase family. As to quaternary structure, homotetramer. The cofactor is Mg(2+). Requires K(+) as cofactor.

It catalyses the reaction pyruvate + ATP = phosphoenolpyruvate + ADP + H(+). The protein operates within carbohydrate degradation; glycolysis; pyruvate from D-glyceraldehyde 3-phosphate: step 5/5. The sequence is that of Pyruvate kinase (pyk1) from Schizosaccharomyces pombe (strain 972 / ATCC 24843) (Fission yeast).